The chain runs to 334 residues: Siroheme decarboxylase (334 aa).

Residue His93 is part of the active site.

Belongs to the Ahb/Nir family.

The enzyme catalyses siroheme + 2 H(+) = 12,18-didecarboxysiroheme + 2 CO2. It participates in porphyrin-containing compound metabolism. Functionally, involved in heme d1 biosynthesis. Catalyzes the decarboxylation of siroheme into didecarboxysiroheme. Siroheme is probably decarboxylated to monodecarboxysiroheme, which is in turn decarboxylated to didecarboxysiroheme. This Hydrogenobacter thermophilus (strain DSM 6534 / IAM 12695 / TK-6) protein is Siroheme decarboxylase.